Here is a 95-residue protein sequence, read N- to C-terminus: Pyruvate synthase subunit PorD (95 aa).

2 4Fe-4S ferredoxin-type domains span residues 34–63 (FRPV…PREN) and 64–93 (GFFE…MILE). Residues Cys-43, Cys-46, Cys-49, Cys-53, Cys-73, Cys-76, Cys-79, and Cys-83 each contribute to the [4Fe-4S] cluster site.

In terms of assembly, heterotetramer of one alpha, one beta, one delta and one gamma chain. The cofactor is [4Fe-4S] cluster.

The polypeptide is Pyruvate synthase subunit PorD (porD) (Methanosarcina barkeri (strain Fusaro / DSM 804)).